The following is a 432-amino-acid chain: Enolase 2 (432 aa).

Glutamine 163 contacts (2R)-2-phosphoglycerate. Glutamate 205 serves as the catalytic Proton donor. Residues aspartate 242, glutamate 287, and aspartate 314 each contribute to the Mg(2+) site. (2R)-2-phosphoglycerate-binding residues include lysine 339, arginine 368, serine 369, and lysine 390. Lysine 339 (proton acceptor) is an active-site residue.

It belongs to the enolase family. Homodimer. Probably forms octamers. Mg(2+) serves as cofactor.

It localises to the cytoplasm. Its subcellular location is the secreted. The protein resides in the cell surface. It catalyses the reaction (2R)-2-phosphoglycerate = phosphoenolpyruvate + H2O. Its pathway is carbohydrate degradation; glycolysis; pyruvate from D-glyceraldehyde 3-phosphate: step 4/5. Functionally, catalyzes the reversible conversion of 2-phosphoglycerate (2-PG) into phosphoenolpyruvate (PEP). It is essential for the degradation of carbohydrates via glycolysis. This Lactobacillus gasseri (strain ATCC 33323 / DSM 20243 / BCRC 14619 / CIP 102991 / JCM 1131 / KCTC 3163 / NCIMB 11718 / NCTC 13722 / AM63) protein is Enolase 2.